Reading from the N-terminus, the 247-residue chain is tRNA pseudouridine synthase A (247 aa).

The Nucleophile role is filled by aspartate 53. Tyrosine 111 lines the substrate pocket.

This sequence belongs to the tRNA pseudouridine synthase TruA family. As to quaternary structure, homodimer.

The enzyme catalyses uridine(38/39/40) in tRNA = pseudouridine(38/39/40) in tRNA. Functionally, formation of pseudouridine at positions 38, 39 and 40 in the anticodon stem and loop of transfer RNAs. This is tRNA pseudouridine synthase A from Bacillus pumilus (strain SAFR-032).